The primary structure comprises 224 residues: 7-cyano-7-deazaguanine synthase (224 aa).

An ATP-binding site is contributed by 9–19 (LSGGLDSATVL). Zn(2+)-binding residues include C189, C199, C202, and C205.

It belongs to the QueC family. Requires Zn(2+) as cofactor.

The catalysed reaction is 7-carboxy-7-deazaguanine + NH4(+) + ATP = 7-cyano-7-deazaguanine + ADP + phosphate + H2O + H(+). The protein operates within purine metabolism; 7-cyano-7-deazaguanine biosynthesis. In terms of biological role, catalyzes the ATP-dependent conversion of 7-carboxy-7-deazaguanine (CDG) to 7-cyano-7-deazaguanine (preQ(0)). The protein is 7-cyano-7-deazaguanine synthase of Ralstonia nicotianae (strain ATCC BAA-1114 / GMI1000) (Ralstonia solanacearum).